A 332-amino-acid polypeptide reads, in one-letter code: Glycerol-3-phosphate dehydrogenase [NAD(P)+] (332 aa).

Positions 13, 34, and 108 each coordinate NADPH. Sn-glycerol 3-phosphate contacts are provided by K108, G136, and S138. A140 contributes to the NADPH binding site. Positions 191, 244, 254, 255, and 256 each coordinate sn-glycerol 3-phosphate. Catalysis depends on K191, which acts as the Proton acceptor. Position 255 (R255) interacts with NADPH. NADPH contacts are provided by V279 and E281.

The protein belongs to the NAD-dependent glycerol-3-phosphate dehydrogenase family.

The protein resides in the cytoplasm. The catalysed reaction is sn-glycerol 3-phosphate + NAD(+) = dihydroxyacetone phosphate + NADH + H(+). The enzyme catalyses sn-glycerol 3-phosphate + NADP(+) = dihydroxyacetone phosphate + NADPH + H(+). Its pathway is membrane lipid metabolism; glycerophospholipid metabolism. Its function is as follows. Catalyzes the reduction of the glycolytic intermediate dihydroxyacetone phosphate (DHAP) to sn-glycerol 3-phosphate (G3P), the key precursor for phospholipid synthesis. The protein is Glycerol-3-phosphate dehydrogenase [NAD(P)+] of Francisella philomiragia subsp. philomiragia (strain ATCC 25017 / CCUG 19701 / FSC 153 / O#319-036).